A 37-amino-acid chain; its full sequence is Cytochrome bd-I ubiquinol oxidase subunit X (37 aa).

Residues 4 to 24 (FAWILGTLLACSFGVITALAL) traverse the membrane as a helical segment.

This sequence belongs to the cytochrome ubiquinol oxidase subunit X family. In terms of assembly, may be a subunit of cytochrome bd-I ubiquinol oxidase. Probably interacts with CydA and CydB.

It is found in the cell inner membrane. The enzyme catalyses 2 a ubiquinol + O2(in) + 4 H(+)(in) = 2 a ubiquinone + 2 H2O(in) + 4 H(+)(out). It participates in energy metabolism; oxidative phosphorylation. Required for correct functioning of cytochrome bd-I oxidase. This protein and AppX may have some functional overlap. This chain is Cytochrome bd-I ubiquinol oxidase subunit X (cydX), found in Escherichia coli (strain K12).